The chain runs to 363 residues: Early boundary activity protein 1 (363 aa).

A compositionally biased stretch (basic and acidic residues) spans 155–168 (MDQEPEHKQSHEQD). Residues 155–242 (MDQEPEHKQS…NAKRRCPGFE (88 aa)) form a disordered region. Residues 198–209 (EDLGLDDDDEDY) show a composition bias toward acidic residues. The region spanning 255-354 (GPNGTEVSRI…TKCADENKML (100 aa)) is the BEN domain.

In terms of assembly, the heterotrimeric Elba complex consists of Elba1, Elba2 and Elba3.

It localises to the nucleus. Its function is as follows. The heterotrimeric Elba complex is required for chromatin domain boundary function during early embryogenesis. It binds to a 8-bp sequence 5'-CCAATAAG-3' in the Fab-7 insulator or boundary element in the bithorax complex and contributes to its insulator or boundary activity. Elba1 may act as a transcriptional repressor and binds the palindromic sequence 5'-CCAATTGG-3' to mediate transcriptional repression. This Drosophila melanogaster (Fruit fly) protein is Early boundary activity protein 1.